A 238-amino-acid polypeptide reads, in one-letter code: Probable transcriptional regulatory protein SSP2054 (238 aa).

Belongs to the TACO1 family. YeeN subfamily.

It is found in the cytoplasm. In Staphylococcus saprophyticus subsp. saprophyticus (strain ATCC 15305 / DSM 20229 / NCIMB 8711 / NCTC 7292 / S-41), this protein is Probable transcriptional regulatory protein SSP2054.